The chain runs to 465 residues: Lysosomal dipeptide transporter MFSD1 (465 aa).

A disordered region spans residues 1 to 23; that stretch reads MEEEDEEARALLAGGPDEADRGA. A Dileucine internalization motif motif is present at residues 11–12; it reads LL. Helical transmembrane passes span 39-59, 83-103, 113-133, 135-155, 170-191, 213-233, 266-286, 304-324, 331-351, 361-381, 392-412, and 418-438; these read LVHRLLVLLLMCFLGFGSYFC, LLYAWYSWSNVVLCFFGGFLI, TIIFSCFVCIGQVVFALGGIF, AFWLMEFGRFVFGIGGESLAV, LNLVFGLQLSMARIGSTVNMNL, ITLMIGGVTCILSLICALALA, LWLIFIICVCYYVAVFPFIGL, AINSVVYVISAPMSPVFGLLV, IIWVLCAVAATLVSHMMLAFT, LLGLSYSLLACALWPMVAFVV, FMQSIQNLGLAIISIIAGMIL, and LFLEVFFIACVSLSLLSVVLL.

It belongs to the major facilitator superfamily. Homodimer. Interacts with lysosomal protein GLMP (via lumenal domain); the interaction starts while both proteins are still in the endoplasmic reticulum and is required for stabilization of MFSD1 in lysosomes but has no direct effect on its targeting to lysosomes or transporter activity.

It localises to the lysosome membrane. It catalyses the reaction L-alpha-aminoacyl-L-arginine(out) = L-alpha-aminoacyl-L-arginine(in). The enzyme catalyses L-arginyl-L-alpha-amino acid(out) = L-arginyl-L-alpha-amino acid(in). It carries out the reaction L-arginyl-glycine(out) = L-arginyl-glycine(in). The catalysed reaction is L-alpha-aminoacyl-L-lysine(out) = L-alpha-aminoacyl-L-lysine(in). It catalyses the reaction L-aspartyl-L-lysine(out) = L-aspartyl-L-lysine(in). The enzyme catalyses L-alanyl-L-lysine(out) = L-alanyl-L-lysine(in). It carries out the reaction L-lysyl-L-alpha-amino acid(out) = L-lysyl-L-alpha-amino acid(in). The catalysed reaction is L-lysyl-L-alanine(out) = L-lysyl-L-alanine(in). It catalyses the reaction L-lysyl-L-lysine(out) = L-lysyl-L-lysine(in). The enzyme catalyses L-lysyl-glycine(out) = L-lysyl-glycine(in). It carries out the reaction L-alpha-aminoacyl-L-histidine(out) = L-alpha-aminoacyl-L-histidine(in). The catalysed reaction is L-histidyl-L-alpha-amino acid(out) = L-histidyl-L-alpha-amino acid(in). It catalyses the reaction L-histidyl-glycine(out) = L-histidyl-glycine(in). Its function is as follows. Lysosomal dipeptide uniporter that selectively exports lysine, arginine or histidine-containing dipeptides with a net positive charge from the lysosome lumen into the cytosol. Could play a role in a specific type of protein O-glycosylation indirectly regulating macrophages migration and tissue invasion. Also essential for liver homeostasis. The sequence is that of Lysosomal dipeptide transporter MFSD1 from Pongo abelii (Sumatran orangutan).